Here is a 580-residue protein sequence, read N- to C-terminus: PTS system fructose-specific EIIB'BC component (580 aa).

2 consecutive PTS EIIB type-2 domains span residues 1 to 99 and 120 to 215; these read MSSS…QLAA and IVAI…KALA. The active-site Phosphocysteine intermediate; for EIIB activity is the Cys-126. Cys-126 bears the Phosphocysteine; by EIIA mark. Residues 243-580 enclose the PTS EIIC type-2 domain; the sequence is AYKHLMTGVS…LKKPVADVIA (338 aa). The next 9 membrane-spanning stretches (helical) occupy residues 254-274, 289-309, 332-352, 369-389, 410-430, 451-471, 483-503, 509-529, and 549-571; these read MLPF…LGGI, LFQI…AGYI, LNAG…GVAA, VLIL…YVFG, SALL…GGPV, AAAM…TWVF, ATAA…PYAA, TIPA…TAGA, and HLLN…LRLL.

It localises to the cell inner membrane. The catalysed reaction is D-fructose(out) + N(pros)-phospho-L-histidyl-[protein] = D-fructose 1-phosphate(in) + L-histidyl-[protein]. In terms of biological role, the phosphoenolpyruvate-dependent sugar phosphotransferase system (sugar PTS), a major carbohydrate active transport system, catalyzes the phosphorylation of incoming sugar substrates concomitantly with their translocation across the cell membrane. The enzyme II FruAB PTS system is involved in fructose transport. This is PTS system fructose-specific EIIB'BC component from Xanthomonas campestris pv. campestris (strain ATCC 33913 / DSM 3586 / NCPPB 528 / LMG 568 / P 25).